The chain runs to 99 residues: Integration host factor subunit alpha (99 aa).

A disordered region spans residues 52 to 73; the sequence is FGNFTLRDKPQRPGRNPKTGEE.

This sequence belongs to the bacterial histone-like protein family. In terms of assembly, heterodimer of an alpha and a beta chain.

In terms of biological role, this protein is one of the two subunits of integration host factor, a specific DNA-binding protein that functions in genetic recombination as well as in transcriptional and translational control. This is Integration host factor subunit alpha from Legionella pneumophila subsp. pneumophila (strain Philadelphia 1 / ATCC 33152 / DSM 7513).